The primary structure comprises 91 residues: Kazal-type trypsin inhibitor (91 aa).

Residues 1–22 form the signal peptide; the sequence is MRHIGVFVGVLALALVLLVVEA. The 54-residue stretch at 25 to 78 folds into the Kazal-like domain; sequence DAERGVCACPRIYMPVCGSNLKTYNNDCLLRCEINSDLGRANNLRKIADQACDN. Disulfide bonds link C31–C56, C33–C52, and C41–C76. A glycan (N-linked (GlcNAc...) asparagine) is linked at N78.

Interacts with human PLG (plasmin). In terms of tissue distribution, female salivary gland. Female gut at 3 and 24 hours after blood feeding. Female carcass. Male tissues. Not detected in ovary and fat body at 3 and 24 hours after blood feeding.

The protein resides in the secreted. Anticoagulant protein that decreases host thrombin (F2) activity via an uncompetitive inhibition mechanism. Inhibits amidolytic activity of host plasmin (PLG). Inhibits amidolytic activity of host trypsin. Inhibits trypsin-like endogenous activity from gut of female mosquitoes 24 hours after feeding and weakly affects enzyme activity from gut 3 hours after feeding, suggesting a possible role as an inhibitor of endogenous proteases. Its function is as follows. (Microbial infection) Limits host plasmin-mediated enhancement of dengue virus type 2 infection in mosquito midgut. This is Kazal-type trypsin inhibitor from Aedes aegypti (Yellowfever mosquito).